The primary structure comprises 613 residues: MPDYRSKTSTQGRNMAGARALWRATGMKDEDFKKPIIAIANSFTQFVPGHVHLKDLGQLVAREIERAGGVAKEFNTIAVDDGIAMGHDGMLYSLPSREIIADAVEYMVNAHCADAIVCISNCDKITPGMLMAALRLNIPVIFVSGGPMEAGKTKLASHGLDLVDAMVIAADSTASDEKVAEYERSACPTCGSCSGMFTANSMNCLTEALGLALPGNGSTLATHSDREQLFLTAGRTIVELCKRYYGENDESVLPRSIANFKAFENAMMLDIAMGGSTNTILHLLAAAQEGEVAFDLRDIDRLSRKVPQLCKVAPNIQNYHMEDVHRAGGIFSILGSLARGGLLHTDLPTVHSRSMEEAIAKWDITQTDDEAVHTFFKAGPAGIPTQTAFSQSTRWETLDDDRENGCIRSFEHAYSQEGGLAVLYGNIALDGCVVKTAGVDESIHVFEGTAKIFESQDSAVRGILADEVKAGDIVIIRYEGPKGGPGMQEMLYPTSYLKSKGLGKACALLTDGRFSGGTSGLSIGHASPEAAAGGAIGLVRDGDKVLIDIPNRSINLLVSDEELAERRVEQDKKGWKPAEVRPRKVTTALKAYALLATSADKGAVRNKAMLEGL.

Residue D81 participates in Mg(2+) binding. C122 contacts [2Fe-2S] cluster. The Mg(2+) site is built by D123 and K124. At K124 the chain carries N6-carboxylysine. Position 193 (C193) interacts with [2Fe-2S] cluster. Mg(2+) is bound at residue E489. S515 serves as the catalytic Proton acceptor.

Belongs to the IlvD/Edd family. In terms of assembly, homodimer. Requires [2Fe-2S] cluster as cofactor. Mg(2+) serves as cofactor.

The catalysed reaction is (2R)-2,3-dihydroxy-3-methylbutanoate = 3-methyl-2-oxobutanoate + H2O. The enzyme catalyses (2R,3R)-2,3-dihydroxy-3-methylpentanoate = (S)-3-methyl-2-oxopentanoate + H2O. The protein operates within amino-acid biosynthesis; L-isoleucine biosynthesis; L-isoleucine from 2-oxobutanoate: step 3/4. It participates in amino-acid biosynthesis; L-valine biosynthesis; L-valine from pyruvate: step 3/4. Its function is as follows. Functions in the biosynthesis of branched-chain amino acids. Catalyzes the dehydration of (2R,3R)-2,3-dihydroxy-3-methylpentanoate (2,3-dihydroxy-3-methylvalerate) into 2-oxo-3-methylpentanoate (2-oxo-3-methylvalerate) and of (2R)-2,3-dihydroxy-3-methylbutanoate (2,3-dihydroxyisovalerate) into 2-oxo-3-methylbutanoate (2-oxoisovalerate), the penultimate precursor to L-isoleucine and L-valine, respectively. This Pseudomonas putida (strain ATCC 700007 / DSM 6899 / JCM 31910 / BCRC 17059 / LMG 24140 / F1) protein is Dihydroxy-acid dehydratase.